Reading from the N-terminus, the 1324-residue chain is Synaptojanin-1 (1324 aa).

One can recognise an SAC domain in the interval 119–442 (VRKVLNSGNF…GDSISKIYAG (324 aa)). The tract at residues 475 to 859 (AIDVLLLGNT…GRAELKTSDH (385 aa)) is catalytic. 2 positions are modified to phosphoserine: serine 820 and serine 830. Residues 902–971 (SSLPENNFFN…RTITITLKSP (70 aa)) form the RRM domain. Residues 1030–1324 (LQPSSSSALA…SDPFEDLSLN (295 aa)) are disordered. Residues 1080–1103 (ASQSSPVDTLPATQLQQKDSSQTL) show a composition bias toward polar residues. A compositionally biased stretch (pro residues) spans 1108–1130 (PPPPRPVAPPARPAPPQRPPPPS). The span at 1138 to 1156 (ARERVWSTRKAQERPRRDN) shows a compositional bias: basic and acidic residues. Arginine 1186 carries the omega-N-methylarginine modification. Threonine 1205 is modified (phosphothreonine). A Phosphoserine modification is found at serine 1277. Residues 1278–1292 (SHSLPSDAPAAAAGA) show a composition bias toward low complexity.

Belongs to the synaptojanin family. It in the central section; belongs to the inositol 1,4,5-trisphosphate 5-phosphatase family. As to quaternary structure, interacts with ASH/GRB2. Interacts with PACSIN1, PACSIN2 and PACSIN3. Interacts with AMPH, SH3GL1, SH3GL2 and SH3GL3. Interacts with MYO1E (via SH3 domain). Interacts with BIN1 and DNM1. Interacts with EPS15. Ubiquitously expressed with highest levels in brain.

The protein localises to the cytoplasm. Its subcellular location is the perinuclear region. It catalyses the reaction a 1,2-diacyl-sn-glycero-3-phospho-(1D-myo-inositol-4,5-bisphosphate) + H2O = a 1,2-diacyl-sn-glycero-3-phospho-(1D-myo-inositol 4-phosphate) + phosphate. Its function is as follows. Phosphatase that acts on various phosphoinositides, including phosphatidylinositol 4-phosphate, phosphatidylinositol (4,5)-bisphosphate and phosphatidylinositol (3,4,5)-trisphosphate. Has a role in clathrin-mediated endocytosis. Hydrolyzes PIP2 bound to actin regulatory proteins resulting in the rearrangement of actin filaments downstream of tyrosine kinase and ASH/GRB2. The protein is Synaptojanin-1 (SYNJ1) of Bos taurus (Bovine).